The primary structure comprises 401 residues: Coenzyme A biosynthesis bifunctional protein CoaBC (401 aa).

The interval 1–190 (MQTLAGKKIL…FQPKPLQDKS (190 aa)) is phosphopantothenoylcysteine decarboxylase. The active-site Proton donor is C159. Residues 191-401 (ILITAGPTRE…LKQIQTLMGH (211 aa)) form a phosphopantothenate--cysteine ligase region. CTP-binding positions include D279, K289, 307-310 (PDIV), F326, K340, and K344.

The protein in the N-terminal section; belongs to the HFCD (homo-oligomeric flavin containing Cys decarboxylase) superfamily. In the C-terminal section; belongs to the PPC synthetase family. Requires Mg(2+) as cofactor. It depends on FMN as a cofactor.

The enzyme catalyses N-[(R)-4-phosphopantothenoyl]-L-cysteine + H(+) = (R)-4'-phosphopantetheine + CO2. It carries out the reaction (R)-4'-phosphopantothenate + L-cysteine + CTP = N-[(R)-4-phosphopantothenoyl]-L-cysteine + CMP + diphosphate + H(+). Its pathway is cofactor biosynthesis; coenzyme A biosynthesis; CoA from (R)-pantothenate: step 2/5. It functions in the pathway cofactor biosynthesis; coenzyme A biosynthesis; CoA from (R)-pantothenate: step 3/5. Functionally, catalyzes two sequential steps in the biosynthesis of coenzyme A. In the first step cysteine is conjugated to 4'-phosphopantothenate to form 4-phosphopantothenoylcysteine. In the second step the latter compound is decarboxylated to form 4'-phosphopantotheine. This is Coenzyme A biosynthesis bifunctional protein CoaBC from Vibrio vulnificus (strain YJ016).